The chain runs to 447 residues: MELTEPLPSAAVQKEEQELLDRTFFSWAEFSRFFDKWCQQRLVVFSVKSSTRVARSPWANTPPLYRLIHVLKYSYVLLVCKDVRMPNKSTAWPPQPSCPAFITVKLSPLRDRLVVTECQLTHSHPACPREFAYHFRPGHLLANSCLPVRITNQISKQFVAPADVRRLLTHCKGPDHGVLDALQVLEGLFRTDPEAKVKLVFVEDQAMVETVFLLTSRTRALLRRFPRILLVDRLPGLQGTLDLMAVLCVDSAGRARQAACCVARPGTPSLLRFMLVSLLQSAPDVKGRVRCLTAGPEVAGQLRAVRQLLPCARVQICRAQGLETLFSKAQELGGASQEDPDLWPLLCRLADSKSYTAYSEALAELRSQAPTAFIRYFEHNWAPRHDMWVRFRAYEATRDLDACALVRSHRRRLLRRLSPSHSVAQCLRDLVAMQWADATGEAALRGC.

This is an uncharacterized protein from Mus musculus (Mouse).